A 957-amino-acid polypeptide reads, in one-letter code: Glycine dehydrogenase (decarboxylating) (957 aa).

Position 708 is an N6-(pyridoxal phosphate)lysine (K708).

The protein belongs to the GcvP family. As to quaternary structure, the glycine cleavage system is composed of four proteins: P, T, L and H. It depends on pyridoxal 5'-phosphate as a cofactor.

It catalyses the reaction N(6)-[(R)-lipoyl]-L-lysyl-[glycine-cleavage complex H protein] + glycine + H(+) = N(6)-[(R)-S(8)-aminomethyldihydrolipoyl]-L-lysyl-[glycine-cleavage complex H protein] + CO2. In terms of biological role, the glycine cleavage system catalyzes the degradation of glycine. The P protein binds the alpha-amino group of glycine through its pyridoxal phosphate cofactor; CO(2) is released and the remaining methylamine moiety is then transferred to the lipoamide cofactor of the H protein. This is Glycine dehydrogenase (decarboxylating) from Escherichia coli O81 (strain ED1a).